Here is a 278-residue protein sequence, read N- to C-terminus: Transmembrane protein 41A-B (278 aa).

The signal sequence occupies residues 1–23 (MRSIWGLIVLVAAATFYLYLLSA). A run of 5 helical transmembrane segments spans residues 78-98 (GYVF…AIPG), 101-121 (FLNM…IACT), 164-184 (LFFF…FLNV), 191-211 (IPIP…NFIC), and 230-250 (WFTL…GALI).

This sequence belongs to the TMEM41 family.

It localises to the membrane. This is Transmembrane protein 41A-B from Danio rerio (Zebrafish).